The sequence spans 369 residues: MTVTGIVAEFNPFHNGHKYLLEQAQGIKVIAMSGNFMQRGEPAIVDKWTRAQMALENGADLVIELPFLVSVQSADYFASGAVSILARLGVDNLCFGTEEMLDYDRIGDIYVNKKEEMEAFLKKQSDSLSYPQKTQAMWQEFAGIAFSGQTPNHILGLAYTKAASQNGIRLNPIQRQGAGYHSSEKTEIFASATSLRKHQSDRFFVEKGMPNSDLFLNSPQVVWQDYFSLLKYQIMTHSDLTQIYQVNEEIANRIKSQIRYVETVDELVDKVATKRYTKARIRRLLTYILINAVESPIPNAIHVLGFTQKGQQHLKSVKKSVDIVTRIGSQTWDSLTQRADSVYQMGNANIAEQTWGRIPFHQSVSQSDL.

ATP contacts are provided by residues 7–20 (VAEF…HKYL), glycine 96, asparagine 152, and arginine 175.

It belongs to the TmcAL family.

It is found in the cytoplasm. The catalysed reaction is cytidine(34) in elongator tRNA(Met) + acetate + ATP = N(4)-acetylcytidine(34) in elongator tRNA(Met) + AMP + diphosphate. Functionally, catalyzes the formation of N(4)-acetylcytidine (ac(4)C) at the wobble position of elongator tRNA(Met), using acetate and ATP as substrates. First activates an acetate ion to form acetyladenylate (Ac-AMP) and then transfers the acetyl group to tRNA to form ac(4)C34. This is tRNA(Met) cytidine acetate ligase from Streptococcus agalactiae serotype III (strain NEM316).